The sequence spans 402 residues: Odorant receptor 22c (402 aa).

Topologically, residues 1–42 are cytoplasmic; it reads MTDSGQPAIADHFYRIPRISGLIVGLWPQRIRGGGGRPWHAH. The helical transmembrane segment at 43–63 threads the bilayer; sequence LLFVFAFAMVVVGAVGEVSYG. Topologically, residues 64–73 are extracellular; sequence CVHLDNLVVA. The helical transmembrane segment at 74–94 threads the bilayer; the sequence is LEAFCPGTTKAVCVLKLWVFF. Over 95–134 the chain is Cytoplasmic; sequence RSNRRWAELVQRLRAILWESRRQEAQRMLVGLATTANRLS. A helical transmembrane segment spans residues 135–155; sequence LLLLSSGTATNAAFTLQPLIM. Residues 156–173 are Extracellular-facing; that stretch reads GLYRWIVQLPGQTELPFN. A helical membrane pass occupies residues 174–194; that stretch reads IILPSFAVQPGVFPLTYVLLT. Residues 195–201 are Cytoplasmic-facing; sequence ASGACTV. The helical transmembrane segment at 202–222 threads the bilayer; sequence FAFSFVDGFFICSCLYICGAF. Topologically, residues 223-276 are extracellular; that stretch reads RLVQQDIRRIFADLHGDSVDVFTEEMNAEVRHRLAQVVERHNAIIDFCTDLTRQ. Residues 277-297 form a helical membrane-spanning segment; that stretch reads FTVIVLMHFLSAAFVLCSTIL. At 298–307 the chain is on the cytoplasmic side; sequence DIMLNTSSLS. Residues 308 to 328 traverse the membrane as a helical segment; the sequence is GLTYICYIIAALTQLFLYCFG. The Extracellular segment spans residues 329-402; that stretch reads GNHVSESSAA…SYITLLKTFL (74 aa).

The protein belongs to the insect chemoreceptor superfamily. Heteromeric odorant receptor channel (TC 1.A.69) family. Or1a subfamily. In terms of assembly, interacts with Orco. Complexes exist early in the endomembrane system in olfactory sensory neurons (OSNs), coupling these complexes to the conserved ciliary trafficking pathway. In terms of tissue distribution, not expressed in either the antenna or maxillary palp.

Its subcellular location is the cell membrane. Functionally, odorant receptor which mediates acceptance or avoidance behavior, depending on its substrates. The odorant receptor repertoire encodes a large collection of odor stimuli that vary widely in identity, intensity, and duration. May form a complex with Orco to form odorant-sensing units, providing sensitive and prolonged odorant signaling and calcium permeability. The chain is Odorant receptor 22c (Or22c) from Drosophila melanogaster (Fruit fly).